The following is a 258-amino-acid chain: Imidazole glycerol phosphate synthase subunit HisF (258 aa).

Residues D11 and D130 contribute to the active site.

It belongs to the HisA/HisF family. As to quaternary structure, heterodimer of HisH and HisF.

The protein resides in the cytoplasm. The catalysed reaction is 5-[(5-phospho-1-deoxy-D-ribulos-1-ylimino)methylamino]-1-(5-phospho-beta-D-ribosyl)imidazole-4-carboxamide + L-glutamine = D-erythro-1-(imidazol-4-yl)glycerol 3-phosphate + 5-amino-1-(5-phospho-beta-D-ribosyl)imidazole-4-carboxamide + L-glutamate + H(+). Its pathway is amino-acid biosynthesis; L-histidine biosynthesis; L-histidine from 5-phospho-alpha-D-ribose 1-diphosphate: step 5/9. IGPS catalyzes the conversion of PRFAR and glutamine to IGP, AICAR and glutamate. The HisF subunit catalyzes the cyclization activity that produces IGP and AICAR from PRFAR using the ammonia provided by the HisH subunit. The sequence is that of Imidazole glycerol phosphate synthase subunit HisF from Methylobacterium nodulans (strain LMG 21967 / CNCM I-2342 / ORS 2060).